The following is a 276-amino-acid chain: Transmembrane protein 53 (276 aa).

The helical transmembrane segment at 170–190 threads the bilayer; that stretch reads LLLLAAFALVVILFHFLLAPF.

The protein belongs to the TMEM53 family. Expressed in liver (at protein level).

The protein localises to the nucleus outer membrane. Functionally, negatively regulates bone morphogenetic protein (BMP) signaling in osteoblast lineage cells by blocking cytoplasm-nucleus translocation of phosphorylated SMAD1/5/9 proteins. The sequence is that of Transmembrane protein 53 (Tmem53) from Mus musculus (Mouse).